A 339-amino-acid polypeptide reads, in one-letter code: Cathepsin L (339 aa).

An N-terminal signal peptide occupies residues 1 to 17 (MRTVLVALLALVALTQA). Residues 18-121 (ISPLDLIKEE…ATYIPPAHVT (104 aa)) constitute a propeptide, activation peptide. N96 carries N-linked (GlcNAc...) asparagine glycosylation. 3 disulfide bridges follow: C143–C186, C177–C219, and C278–C328. Residue C146 is part of the active site. Residue H285 is part of the active site. Positions 295-298 (DESG) are excised as a propeptide. N306 is an active-site residue.

This sequence belongs to the peptidase C1 family. In terms of assembly, dimer of a heavy and a light chain linked by disulfide bonds.

It is found in the lysosome. The catalysed reaction is Specificity close to that of papain. As compared to cathepsin B, cathepsin L exhibits higher activity toward protein substrates, but has little activity on Z-Arg-Arg-NHMec, and no peptidyl-dipeptidase activity.. Important for the overall degradation of proteins in lysosomes. Required for differentiation of imaginal disks. In Sarcophaga peregrina (Flesh fly), this protein is Cathepsin L.